Here is a 288-residue protein sequence, read N- to C-terminus: Large ribosomal subunit protein uL2 (288 aa).

Over residues 29–43 (PEKSLTRGFKRDKGR) the composition is skewed to basic and acidic residues. Disordered stretches follow at residues 29-59 (PEKS…GGHK) and 210-288 (GRNR…GRQS). 2 stretches are compositionally biased toward basic residues: residues 210 to 221 (GRNRWKGRRPKV) and 272 to 288 (VRRR…GRQS).

The protein belongs to the universal ribosomal protein uL2 family. As to quaternary structure, part of the 50S ribosomal subunit. Forms a bridge to the 30S subunit in the 70S ribosome.

One of the primary rRNA binding proteins. Required for association of the 30S and 50S subunits to form the 70S ribosome, for tRNA binding and peptide bond formation. It has been suggested to have peptidyltransferase activity; this is somewhat controversial. Makes several contacts with the 16S rRNA in the 70S ribosome. The sequence is that of Large ribosomal subunit protein uL2 from Thermosynechococcus vestitus (strain NIES-2133 / IAM M-273 / BP-1).